A 323-amino-acid chain; its full sequence is Mycothiol acetyltransferase (323 aa).

Glu44 is a binding site for 1D-myo-inositol 2-(L-cysteinylamino)-2-deoxy-alpha-D-glucopyranoside. 2 N-acetyltransferase domains span residues Gly77–Arg176 and Val173–Gly323. Residue Ile98–Val100 coordinates acetyl-CoA. Residues Glu200, Lys240, and Glu253 each contribute to the 1D-myo-inositol 2-(L-cysteinylamino)-2-deoxy-alpha-D-glucopyranoside site. Residues Val257–Val259 and Gln264–Lys270 each bind acetyl-CoA. Position 291 (Tyr291) interacts with 1D-myo-inositol 2-(L-cysteinylamino)-2-deoxy-alpha-D-glucopyranoside.

The protein belongs to the acetyltransferase family. MshD subfamily. Monomer.

The enzyme catalyses 1D-myo-inositol 2-(L-cysteinylamino)-2-deoxy-alpha-D-glucopyranoside + acetyl-CoA = mycothiol + CoA + H(+). Catalyzes the transfer of acetyl from acetyl-CoA to desacetylmycothiol (Cys-GlcN-Ins) to form mycothiol. The polypeptide is Mycothiol acetyltransferase (Pseudarthrobacter chlorophenolicus (strain ATCC 700700 / DSM 12829 / CIP 107037 / JCM 12360 / KCTC 9906 / NCIMB 13794 / A6) (Arthrobacter chlorophenolicus)).